The following is a 150-amino-acid chain: Transcription antitermination protein NusB (150 aa).

This sequence belongs to the NusB family.

Functionally, involved in transcription antitermination. Required for transcription of ribosomal RNA (rRNA) genes. Binds specifically to the boxA antiterminator sequence of the ribosomal RNA (rrn) operons. The protein is Transcription antitermination protein NusB of Saccharophagus degradans (strain 2-40 / ATCC 43961 / DSM 17024).